The chain runs to 54 residues: ATP synthase protein 8 (54 aa).

The helical transmembrane segment at 9 to 25 threads the bilayer; sequence WVFLFFLVWLVLGFLGL.

The protein belongs to the ATPase protein 8 family. In terms of assembly, F-type ATPases have 2 components, CF(1) - the catalytic core - and CF(0) - the membrane proton channel.

The protein resides in the mitochondrion membrane. In terms of biological role, mitochondrial membrane ATP synthase (F(1)F(0) ATP synthase or Complex V) produces ATP from ADP in the presence of a proton gradient across the membrane which is generated by electron transport complexes of the respiratory chain. F-type ATPases consist of two structural domains, F(1) - containing the extramembraneous catalytic core and F(0) - containing the membrane proton channel, linked together by a central stalk and a peripheral stalk. During catalysis, ATP synthesis in the catalytic domain of F(1) is coupled via a rotary mechanism of the central stalk subunits to proton translocation. Part of the complex F(0) domain. Minor subunit located with subunit a in the membrane. In Branchiostoma floridae (Florida lancelet), this protein is ATP synthase protein 8 (MTATP8).